Consider the following 324-residue polypeptide: Probable metal transport system membrane protein CPn_0346/CP_0414/CPj0346/CpB0353 (324 aa).

10 consecutive transmembrane segments (helical) span residues 1 to 21 (MALGPSPYYGVSFFQFFSVFF), 39 to 59 (IQIIVFLAISCSGAFAGTFLV), 64 to 84 (AMYANAVSHTVLFGLVCVCLF), 94 to 114 (GTLTLAAMATAMLTGFLIYFI), 125 to 145 (STALVFSLLFSLSLVLLVFMT), 165 to 185 (EDIFPVTIVILANAVITIFAF), 201 to 221 (LGIPIRLVDYLIIFQLSACLV), 226 to 246 (AVGVLMALAFLIIPSLIAKVI), 252 to 272 (SLMAWSLVFSIGTAFLAPASS), and 286 to 306 (SGISVVFLTMMYIVVKFISYF).

It belongs to the ABC-3 integral membrane protein family.

It localises to the cell inner membrane. Functionally, part of an ATP-driven transport system CPn_0346/CPn_0347/CPn_0348/CPn_0349 for a metal. The polypeptide is Probable metal transport system membrane protein CPn_0346/CP_0414/CPj0346/CpB0353 (Chlamydia pneumoniae (Chlamydophila pneumoniae)).